A 616-amino-acid polypeptide reads, in one-letter code: Mitochondrial Rho GTPase 2 (616 aa).

The Cytoplasmic segment spans residues Met-1–Phe-590. A Miro 1 domain is found at Lys-2–His-168. Residues Gly-16, Lys-17, Thr-18, and Ser-19 each coordinate GTP. Thr-18 is a binding site for Mg(2+). A Mg(2+)-binding site is contributed by Asp-57. 6 residues coordinate GTP: Ser-59, Asn-118, Lys-119, Asp-121, Ala-149, and Lys-150. EF-hand domains follow at residues Gln-184–Asn-219 and Phe-304–Thr-339. Residues Asp-199, Asn-201, Glu-208, Asp-317, Asp-319, Asp-321, and Glu-328 each coordinate Ca(2+). The Miro 2 domain maps to Arg-416–Phe-577. 5 residues coordinate GTP: Gly-428, Gly-430, Lys-431, Ser-432, and Ala-433. Mg(2+) is bound at residue Ser-432. Glu-474 contacts Mg(2+). Positions 528, 530, and 559 each coordinate GTP. Residues Trp-591 to Leu-613 traverse the membrane as a helical; Anchor for type IV membrane protein segment. At Arg-614–Lys-616 the chain is on the mitochondrial intermembrane side.

Belongs to the mitochondrial Rho GTPase family. As to quaternary structure, homodimer.

Its subcellular location is the mitochondrion outer membrane. The enzyme catalyses GTP + H2O = GDP + phosphate + H(+). The catalysed reaction is ATP + H2O = ADP + phosphate + H(+). It carries out the reaction UTP + H2O = UDP + phosphate + H(+). In terms of biological role, atypical mitochondrial nucleoside-triphosphatase (NTPase) involved in mitochondrial trafficking. Probably involved in control of anterograde transport of mitochondria and their subcellular distribution. Can hydrolyze GTP, ATP and UTP. This is Mitochondrial Rho GTPase 2 (rhot2) from Xenopus tropicalis (Western clawed frog).